We begin with the raw amino-acid sequence, 304 residues long: Glyceraldehyde-3-phosphate dehydrogenase 2 (304 aa).

NAD(+) is bound by residues 1–2 (RI), D22, and R67. D-glyceraldehyde 3-phosphate is bound by residues 138-140 (SCT), T169, 198-199 (TG), and R221. The active-site Nucleophile is C139. N303 lines the NAD(+) pocket.

This sequence belongs to the glyceraldehyde-3-phosphate dehydrogenase family. In terms of assembly, homotetramer.

The protein resides in the cytoplasm. It carries out the reaction D-glyceraldehyde 3-phosphate + phosphate + NAD(+) = (2R)-3-phospho-glyceroyl phosphate + NADH + H(+). It participates in carbohydrate degradation; glycolysis; pyruvate from D-glyceraldehyde 3-phosphate: step 1/5. The chain is Glyceraldehyde-3-phosphate dehydrogenase 2 (Gapdh2) from Drosophila subobscura (Fruit fly).